A 113-amino-acid chain; its full sequence is Small ribosomal subunit protein bS6 (113 aa).

This sequence belongs to the bacterial ribosomal protein bS6 family.

In terms of biological role, binds together with bS18 to 16S ribosomal RNA. In Vesicomyosocius okutanii subsp. Calyptogena okutanii (strain HA), this protein is Small ribosomal subunit protein bS6.